The primary structure comprises 433 residues: Keratin, type I cytoskeletal 47 kDa (433 aa).

The interval 1 to 73 is head; it reads MSYSTRSISQ…AFNVSVTSNN (73 aa). Positions 74-109 are coil 1A; the sequence is GKETMQNLNDRLANYLDRVRSLEQANHELELKIREY. Positions 74 to 385 constitute an IF rod domain; it reads GKETMQNLND…RLLEGEDTRF (312 aa). Positions 110–127 are linker 1; that stretch reads LDKKAAVGSLDYSGYYNT. Residues 128-219 are coil 1B; the sequence is INLLRSQIND…KNHEEELAVV (92 aa). A linker 12 region spans residues 220 to 242; the sequence is RSSARGNVDVQVDSAPPVDLAQI. The interval 243-381 is coil 2; it reads MADVRSQYES…ATYRRLLEGE (139 aa). The tail stretch occupies residues 382–433; that stretch reads DTRFSQTETQKAVTIVSKEQSSSSIKKVKTVIEEVVDGKVVSSRVEELTETS.

This sequence belongs to the intermediate filament family. In terms of assembly, heterotetramer of two type I and two type II keratins.

This chain is Keratin, type I cytoskeletal 47 kDa (xk70a), found in Xenopus laevis (African clawed frog).